The following is a 505-amino-acid chain: Maturase K (505 aa).

Belongs to the intron maturase 2 family. MatK subfamily.

The protein resides in the plastid. The protein localises to the chloroplast. Its function is as follows. Usually encoded in the trnK tRNA gene intron. Probably assists in splicing its own and other chloroplast group II introns. The sequence is that of Maturase K from Blitum bonus-henricus (Good King Henry).